A 100-amino-acid chain; its full sequence is Urease subunit gamma (100 aa).

It belongs to the urease gamma subunit family. Heterotrimer of UreA (gamma), UreB (beta) and UreC (alpha) subunits. Three heterotrimers associate to form the active enzyme.

The protein resides in the cytoplasm. The catalysed reaction is urea + 2 H2O + H(+) = hydrogencarbonate + 2 NH4(+). The protein operates within nitrogen metabolism; urea degradation; CO(2) and NH(3) from urea (urease route): step 1/1. The polypeptide is Urease subunit gamma (Halalkalibacterium halodurans (strain ATCC BAA-125 / DSM 18197 / FERM 7344 / JCM 9153 / C-125) (Bacillus halodurans)).